A 747-amino-acid chain; its full sequence is Myotubularin-related protein 12 (747 aa).

A Myotubularin phosphatase domain is found at phenylalanine 205 to tyrosine 643. An interaction with MTM1 region spans residues valine 449–lysine 558. A phosphoserine mark is found at serine 564, serine 601, and serine 716.

The protein belongs to the protein-tyrosine phosphatase family. Non-receptor class myotubularin subfamily. In terms of assembly, heterodimer with lipid phosphatase MTM1. Heterodimer with lipid phosphatase MTMR2. In terms of tissue distribution, expressed in skeletal muscles (at protein level). Ubiquitous with prominent expression in brain, heart, kidney, placenta, and lung.

The protein resides in the cytoplasm. It localises to the sarcoplasmic reticulum. Its subcellular location is the myofibril. The protein localises to the sarcomere. In terms of biological role, acts as an adapter for the myotubularin-related phosphatases. Regulates phosphatase MTM1 protein stability and possibly its intracellular location. By stabilizing MTM1 protein levels, required for skeletal muscle maintenance but not for myogenesis. This Homo sapiens (Human) protein is Myotubularin-related protein 12 (MTMR12).